Consider the following 341-residue polypeptide: Anthranilate phosphoribosyltransferase (341 aa).

Residues glycine 84, 87–88 (GD), threonine 92, 94–97 (NVTT), 112–120 (KCGNRSVSS), and serine 124 contribute to the 5-phospho-alpha-D-ribose 1-diphosphate site. Glycine 84 lines the anthranilate pocket. Threonine 96 provides a ligand contact to Mg(2+). Asparagine 115 is a binding site for anthranilate. Residue arginine 170 coordinates anthranilate. Mg(2+) contacts are provided by aspartate 228 and glutamate 229.

It belongs to the anthranilate phosphoribosyltransferase family. As to quaternary structure, homodimer. Requires Mg(2+) as cofactor.

It carries out the reaction N-(5-phospho-beta-D-ribosyl)anthranilate + diphosphate = 5-phospho-alpha-D-ribose 1-diphosphate + anthranilate. Its pathway is amino-acid biosynthesis; L-tryptophan biosynthesis; L-tryptophan from chorismate: step 2/5. Its function is as follows. Catalyzes the transfer of the phosphoribosyl group of 5-phosphorylribose-1-pyrophosphate (PRPP) to anthranilate to yield N-(5'-phosphoribosyl)-anthranilate (PRA). The protein is Anthranilate phosphoribosyltransferase of Corynebacterium diphtheriae (strain ATCC 700971 / NCTC 13129 / Biotype gravis).